The chain runs to 400 residues: Lysophospholipid transporter LplT (400 aa).

12 helical membrane-spanning segments follow: residues 19–39 (VIVA…ATLA), 53–73 (VLQM…GQIA), 91–111 (AGAA…LVGI), 139–159 (LMEA…GVLA), 164–184 (IAAL…NLFI), 195–213 (SWRL…VVLW), 227–247 (LFWG…PVAL), 257–277 (YLNA…AKLV), 281–301 (TVSR…IFSL), 304–324 (ALLP…FFVV), 352–372 (NSAM…GVPA), and 373–393 (VAIG…LWIW).

It belongs to the major facilitator superfamily. LplT (TC 2.A.1.42) family.

It localises to the cell inner membrane. In terms of biological role, catalyzes the facilitated diffusion of 2-acyl-glycero-3-phosphoethanolamine (2-acyl-GPE) into the cell. The protein is Lysophospholipid transporter LplT of Salmonella heidelberg (strain SL476).